The sequence spans 149 residues: Nucleoside diphosphate kinase (149 aa).

ATP-binding residues include Lys9, Phe57, Arg85, Thr91, Arg102, and Asn112. His115 (pros-phosphohistidine intermediate) is an active-site residue.

This sequence belongs to the NDK family. As to quaternary structure, homotetramer. Requires Mg(2+) as cofactor.

It localises to the cytoplasm. The enzyme catalyses a 2'-deoxyribonucleoside 5'-diphosphate + ATP = a 2'-deoxyribonucleoside 5'-triphosphate + ADP. It carries out the reaction a ribonucleoside 5'-diphosphate + ATP = a ribonucleoside 5'-triphosphate + ADP. Its function is as follows. Major role in the synthesis of nucleoside triphosphates other than ATP. The ATP gamma phosphate is transferred to the NDP beta phosphate via a ping-pong mechanism, using a phosphorylated active-site intermediate. The sequence is that of Nucleoside diphosphate kinase from Gloeobacter violaceus (strain ATCC 29082 / PCC 7421).